Reading from the N-terminus, the 301-residue chain is Ornithine carbamoyltransferase (301 aa).

Carbamoyl phosphate is bound by residues 46 to 49 (STRT), Gln-73, Arg-97, and 124 to 127 (HPCQ). L-ornithine-binding positions include Asn-154, Asp-218, and 222-223 (SM). Residues 258–259 (CL) and Arg-286 each bind carbamoyl phosphate.

The protein belongs to the aspartate/ornithine carbamoyltransferase superfamily. OTCase family.

The protein resides in the cytoplasm. It catalyses the reaction carbamoyl phosphate + L-ornithine = L-citrulline + phosphate + H(+). The protein operates within amino-acid biosynthesis; L-arginine biosynthesis; L-arginine from L-ornithine and carbamoyl phosphate: step 1/3. In terms of biological role, reversibly catalyzes the transfer of the carbamoyl group from carbamoyl phosphate (CP) to the N(epsilon) atom of ornithine (ORN) to produce L-citrulline. The polypeptide is Ornithine carbamoyltransferase (argF) (Methanothermobacter thermautotrophicus (strain ATCC 29096 / DSM 1053 / JCM 10044 / NBRC 100330 / Delta H) (Methanobacterium thermoautotrophicum)).